The primary structure comprises 586 residues: Inner membrane protein YejM (586 aa).

The Cytoplasmic portion of the chain corresponds to methionine 1 to histidine 20. Residues tryptophan 21–tryptophan 43 form a helical membrane-spanning segment. Residues proline 44 to isoleucine 57 are Periplasmic-facing. The chain crosses the membrane as a helical span at residues isoleucine 58–valine 80. At glycine 81–arginine 84 the chain is on the cytoplasmic side. A helical transmembrane segment spans residues leucine 85 to isoleucine 103. At aspartate 104–aspartate 134 the chain is on the periplasmic side. Residues tryptophan 135–tryptophan 157 traverse the membrane as a helical segment. The Cytoplasmic segment spans residues glutamine 158–arginine 168. Residues phenylalanine 169–alanine 191 form a helical membrane-spanning segment. At aspartate 192–asparagine 586 the chain is on the periplasmic side.

The protein to H.influenzae HI_0842.

It is found in the cell inner membrane. This Escherichia coli O157:H7 protein is Inner membrane protein YejM (yejM).